The chain runs to 482 residues: Probable glycine dehydrogenase (decarboxylating) subunit 2 (482 aa).

Lys-264 carries the N6-(pyridoxal phosphate)lysine modification.

It belongs to the GcvP family. C-terminal subunit subfamily. In terms of assembly, the glycine cleavage system is composed of four proteins: P, T, L and H. In this organism, the P 'protein' is a heterodimer of two subunits. Requires pyridoxal 5'-phosphate as cofactor.

It carries out the reaction N(6)-[(R)-lipoyl]-L-lysyl-[glycine-cleavage complex H protein] + glycine + H(+) = N(6)-[(R)-S(8)-aminomethyldihydrolipoyl]-L-lysyl-[glycine-cleavage complex H protein] + CO2. Its function is as follows. The glycine cleavage system catalyzes the degradation of glycine. The P protein binds the alpha-amino group of glycine through its pyridoxal phosphate cofactor; CO(2) is released and the remaining methylamine moiety is then transferred to the lipoamide cofactor of the H protein. The polypeptide is Probable glycine dehydrogenase (decarboxylating) subunit 2 (Treponema denticola (strain ATCC 35405 / DSM 14222 / CIP 103919 / JCM 8153 / KCTC 15104)).